The primary structure comprises 508 residues: BICD family-like cargo adapter 2 (508 aa).

The segment covering 1–22 (MSSPDGPSFPSGPLSGGASPSG) has biased composition (low complexity). Disordered stretches follow at residues 1–27 (MSSPDGPSFPSGPLSGGASPSGDEGFF), 132–152 (LGEQRSEQQDSGRERARALSE), and 300–351 (AHSL…TSLS). 2 coiled-coil regions span residues 64 to 300 (AAEL…SELA) and 353 to 458 (AEIL…DMQV). Positions 135-149 (QRSEQQDSGRERARA) are enriched in basic and acidic residues. The disordered stretch occupies residues 470–491 (KELSASASSSTPRRAAPRFSLR). The span at 473–489 (SASASSSTPRRAAPRFS) shows a compositional bias: low complexity.

It belongs to the BICDR family. As to quaternary structure, interacts with RAB13.

This Homo sapiens (Human) protein is BICD family-like cargo adapter 2 (BICDL2).